The chain runs to 328 residues: D-cysteine desulfhydrase (328 aa).

Position 51 is an N6-(pyridoxal phosphate)lysine (Lys51).

This sequence belongs to the ACC deaminase/D-cysteine desulfhydrase family. In terms of assembly, homodimer. Pyridoxal 5'-phosphate is required as a cofactor.

The enzyme catalyses D-cysteine + H2O = hydrogen sulfide + pyruvate + NH4(+) + H(+). Functionally, catalyzes the alpha,beta-elimination reaction of D-cysteine and of several D-cysteine derivatives. It could be a defense mechanism against D-cysteine. This chain is D-cysteine desulfhydrase, found in Escherichia coli (strain UTI89 / UPEC).